A 1105-amino-acid polypeptide reads, in one-letter code: Ran-binding protein 6 (1105 aa).

A2 is modified (N-acetylalanine). HEAT repeat units follow at residues F219–K257, K361–Q399, E402–P440, K444–K483, L866–P905, F908–D946, and R949–I987.

This sequence belongs to the importin beta family.

It is found in the cytoplasm. Its subcellular location is the nucleus. May function in nuclear protein import as nuclear transport receptor. In Mus musculus (Mouse), this protein is Ran-binding protein 6 (Ranbp6).